Here is a 278-residue protein sequence, read N- to C-terminus: Tryptophan synthase alpha chain (278 aa).

Active-site proton acceptor residues include glutamate 49 and aspartate 60.

This sequence belongs to the TrpA family. Tetramer of two alpha and two beta chains.

The enzyme catalyses (1S,2R)-1-C-(indol-3-yl)glycerol 3-phosphate + L-serine = D-glyceraldehyde 3-phosphate + L-tryptophan + H2O. It functions in the pathway amino-acid biosynthesis; L-tryptophan biosynthesis; L-tryptophan from chorismate: step 5/5. The alpha subunit is responsible for the aldol cleavage of indoleglycerol phosphate to indole and glyceraldehyde 3-phosphate. The protein is Tryptophan synthase alpha chain of Granulibacter bethesdensis (strain ATCC BAA-1260 / CGDNIH1).